The sequence spans 248 residues: tRNA (guanine-N(1)-)-methyltransferase (248 aa).

Residues G113 and 133–138 (IGDYVL) each bind S-adenosyl-L-methionine.

It belongs to the RNA methyltransferase TrmD family. In terms of assembly, homodimer.

It is found in the cytoplasm. It carries out the reaction guanosine(37) in tRNA + S-adenosyl-L-methionine = N(1)-methylguanosine(37) in tRNA + S-adenosyl-L-homocysteine + H(+). Functionally, specifically methylates guanosine-37 in various tRNAs. The protein is tRNA (guanine-N(1)-)-methyltransferase of Shewanella woodyi (strain ATCC 51908 / MS32).